A 179-amino-acid chain; its full sequence is Natural killer cells antigen CD94 (179 aa).

At 1 to 10 the chain is on the cytoplasmic side; that stretch reads MAVFKTTLWR. Residues 11-31 traverse the membrane as a helical; Signal-anchor for type II membrane protein segment; sequence LISGTLGIICLSLMATLGILL. At 32 to 179 the chain is on the extracellular side; it reads KNSFTKLSIE…NRYICKQQLI (148 aa). Cystine bridges form between Cys-58–Cys-70 and Cys-61–Cys-72. The 108-residue stretch at 68–175 folds into the C-type lectin domain; that stretch reads YRCNCYFISS…CEDKNRYICK (108 aa). N-linked (GlcNAc...) asparagine glycans are attached at residues Asn-83 and Asn-132. Disulfide bonds link Cys-89–Cys-174 and Cys-152–Cys-166.

In terms of assembly, can form disulfide-bonded heterodimer with NKG2 family members KLRC1 and KLRC2. KLRD1-KLRC1 heterodimer interacts with peptide-bound MHC-E-B2M heterotrimeric complex. KLRD1 plays a prominent role in directly interacting with MHC-E. KLRD1-KLRC1 interacts with much higher affinity with peptide-bound MHC-E-B2M than KLRD1-KLRC2. Interacts with the adapter protein TYROBP/DAP12; this interaction is required for cell surface expression and cell activation. In terms of tissue distribution, natural killer cells.

Its subcellular location is the cell membrane. Its function is as follows. Immune receptor involved in self-nonself discrimination. In complex with KLRC1 or KLRC2 on cytotoxic and regulatory lymphocyte subsets, recognizes non-classical major histocompatibility (MHC) class Ib molecule MHC-E loaded with self-peptides derived from the signal sequence of classical MHC class Ia and non-classical MHC class Ib molecules. Enables cytotoxic cells to monitor the expression of MHC class I molecules in healthy cells and to tolerate self. Primarily functions as a ligand binding subunit as it lacks the capacity to signal. KLRD1-KLRC1 acts as an immune inhibitory receptor. Key inhibitory receptor on natural killer (NK) cells that regulates their activation and effector functions. Dominantly counteracts T cell receptor signaling on a subset of memory/effector CD8-positive T cells as part of an antigen-driven response to avoid autoimmunity. On intraepithelial CD8-positive gamma-delta regulatory T cells triggers TGFB1 secretion, which in turn limits the cytotoxic programming of intraepithelial CD8-positive alpha-beta T cells, distinguishing harmless from pathogenic antigens. In MHC-E-rich tumor microenvironment, acts as an immune inhibitory checkpoint and may contribute to progressive loss of effector functions of NK cells and tumor-specific T cells, a state known as cell exhaustion. Upon MHC-E-peptide binding, transmits intracellular signals through KLRC1 immunoreceptor tyrosine-based inhibition motifs (ITIMs) by recruiting INPP5D/SHIP-1 and INPPL1/SHIP-2 tyrosine phosphatases to ITIMs, and ultimately opposing signals transmitted by activating receptors through dephosphorylation of proximal signaling molecules. In terms of biological role, KLRD1-KLRC2 acts as an immune activating receptor. On cytotoxic lymphocyte subsets recognizes MHC-E loaded with signal sequence-derived peptides from non-classical MHC class Ib MHC-G molecules, likely playing a role in the generation and effector functions of adaptive NK cells and in maternal-fetal tolerance during pregnancy. Regulates the effector functions of terminally differentiated cytotoxic lymphocyte subsets, and in particular may play a role in adaptive NK cell response to viral infection. Upon MHC-E-peptide binding, transmits intracellular signals via the adapter protein TYROBP/DAP12, triggering the phosphorylation of proximal signaling molecules and cell activation. The protein is Natural killer cells antigen CD94 (KLRD1) of Pan troglodytes (Chimpanzee).